The chain runs to 101 residues: MEYIYASLLLHSAGKEITEDAVKAVLSAAGVEVEDARVKALVAALEGVDIEEAIEKAAMPVAAAAAPAAAPAEEPKEEKKEEKKEEDTTAAAAAGLGALFG.

The segment at 65 to 89 (AAPAAAPAEEPKEEKKEEKKEEDTT) is disordered. Over residues 73 to 87 (EEPKEEKKEEKKEED) the composition is skewed to basic and acidic residues.

The protein belongs to the eukaryotic ribosomal protein P1/P2 family. In terms of assembly, part of the 50S ribosomal subunit. Homodimer, it forms part of the ribosomal stalk which helps the ribosome interact with GTP-bound translation factors. Forms a heptameric uL10/P0(P1)2(P1)2(P1)2 complex, where uL10/P0 forms an elongated spine to which the P1 dimers bind in a sequential fashion.

In terms of biological role, forms part of the ribosomal stalk, playing a central role in the interaction of the ribosome with GTP-bound translation factors. The chain is Large ribosomal subunit protein P1 from Methanothermococcus thermolithotrophicus (Methanococcus thermolithotrophicus).